We begin with the raw amino-acid sequence, 279 residues long: Fructose-1,6-bisphosphatase class 1 (279 aa).

Mg(2+) is bound by residues Glu-65, Asp-85, Leu-87, and Asp-88. Residues Asp-88 to Ser-91, Tyr-190, and Lys-221 each bind substrate. Glu-227 is a Mg(2+) binding site.

Belongs to the FBPase class 1 family. In terms of assembly, homotetramer. Requires Mg(2+) as cofactor.

It localises to the cytoplasm. The enzyme catalyses beta-D-fructose 1,6-bisphosphate + H2O = beta-D-fructose 6-phosphate + phosphate. It functions in the pathway carbohydrate biosynthesis; gluconeogenesis. The chain is Fructose-1,6-bisphosphatase class 1 from Helicobacter hepaticus (strain ATCC 51449 / 3B1).